The following is a 35-amino-acid chain: Mu-theraphotoxin-Hhn1a (35 aa).

3 disulfide bridges follow: Cys2–Cys17, Cys9–Cys24, and Cys16–Cys31.

The protein belongs to the neurotoxin 10 (Hwtx-1) family. 22 (Htx-4) subfamily. Monomer. Expressed by the venom gland.

Its subcellular location is the secreted. Inhibits selectively tetrodotoxin-sensitive voltage-gated sodium channels (Nav). Does not act by binding to receptor site 3 to slow the inactivation kinetics of sodium currents. This Cyriopagopus hainanus (Chinese bird spider) protein is Mu-theraphotoxin-Hhn1a.